Reading from the N-terminus, the 351-residue chain is Vacuolar protein sorting-associated protein 72 homolog (351 aa).

The disordered stretch occupies residues 1–136 (MAASRSRRNN…DSGRKSIRTS (136 aa)). Positions 36–72 (QEDEEDKEYEQKDEEEDVVDSDFSIDENDEPVSDQEE) are enriched in acidic residues. Phosphoserine occurs at positions 56, 59, and 68. Residues 87–100 (AYKETKPAVKKETK) are compositionally biased toward basic and acidic residues. Positions 105–121 (LHKKRPGGGVTKRRPRP) are enriched in basic residues. Residues 142–202 (QATKIRLKEL…QKMELEKKKS (61 aa)) adopt a coiled-coil conformation. Residues 156-208 (KRKKKKVRVEDYMPTQEELLEEAKITEEENTKSLEKFQKMELEKKKSRPTKRT) mediate DNA binding.

It belongs to the VPS72/YL1 family. As to quaternary structure, interacts with H2AV. Component of the Tip60 chromatin-remodeling complex which contains the catalytic subunit Tip60 and the subunits Domino, Tra1, Brd8, E(Pc), DMAP1, Pontin, Reptin, Ing3, Act87E, BAP55, Mrg15, MrgBP, Gas41 and YL-1.

It localises to the nucleus. Its function is as follows. Part of the Tip60 chromatin-remodeling complex which is involved in DNA repair. Upon induction of DNA double-strand breaks, this complex acetylates phosphorylated H2AV in nucleosomes and exchanges it with unmodified H2AV. This Drosophila melanogaster (Fruit fly) protein is Vacuolar protein sorting-associated protein 72 homolog (YL-1).